The following is a 493-amino-acid chain: Leucine-rich repeat-containing protein 14 (493 aa).

An LRR 1; degenerate repeat occupies 111 to 146 (KHALRVLDMTGLLDDGVEQDPETMSMWDCTAAVART). An LRR 2; degenerate repeat occupies 194-218 (RLCCRDLRAEDLPMRNTVALLQLLD). The LRR 3; degenerate repeat unit spans residues 219-246 (AGCLRRIDLRFNNLGLRGLSVIIPHVAR). One copy of the LRR 4; degenerate repeat lies at 247–282 (FQHLASLRLHYVHGDSRQPSVDGEDNFRYFLAQMGR). 5 LRR repeats span residues 283–307 (FMCL…LSTL), 308–339 (QRPL…AHLK), 340–360 (KLDL…QGLL), 364–391 (ATTL…TLTR), and 392–416 (CASL…LLRD).

It belongs to the PRAME family. LRRC14 subfamily. In terms of assembly, interacts with IKBKB; disrupts IKBKB-IKBKG interaction preventing I-kappa-B-kinase (IKK) core complex formation and leading to a decrease of IKBKB phosphorylation and NF-kappaB activation. Interacts with CHUK.

The protein localises to the cytoplasm. Negatively regulates Toll-like receptor-mediated NF-kappa-B signaling by disrupting IKK core complex formation through interaction with IKBKB. This is Leucine-rich repeat-containing protein 14 from Mus musculus (Mouse).